A 300-amino-acid chain; its full sequence is Porphobilinogen deaminase (300 aa).

Cys-242 is subject to S-(dipyrrolylmethanemethyl)cysteine.

It belongs to the HMBS family. In terms of assembly, monomer. Dipyrromethane serves as cofactor.

The catalysed reaction is 4 porphobilinogen + H2O = hydroxymethylbilane + 4 NH4(+). Its pathway is porphyrin-containing compound metabolism; protoporphyrin-IX biosynthesis; coproporphyrinogen-III from 5-aminolevulinate: step 2/4. Its function is as follows. Tetrapolymerization of the monopyrrole PBG into the hydroxymethylbilane pre-uroporphyrinogen in several discrete steps. The polypeptide is Porphobilinogen deaminase (Rickettsia bellii (strain OSU 85-389)).